The chain runs to 183 residues: Ribosome maturation factor RimM (183 aa).

One can recognise a PRC barrel domain in the interval 102–183; sequence DDDFYWHQLE…CITVDWDPEF (82 aa).

Belongs to the RimM family. In terms of assembly, binds ribosomal protein uS19.

It localises to the cytoplasm. Its function is as follows. An accessory protein needed during the final step in the assembly of 30S ribosomal subunit, possibly for assembly of the head region. Essential for efficient processing of 16S rRNA. May be needed both before and after RbfA during the maturation of 16S rRNA. It has affinity for free ribosomal 30S subunits but not for 70S ribosomes. This Saccharophagus degradans (strain 2-40 / ATCC 43961 / DSM 17024) protein is Ribosome maturation factor RimM.